A 393-amino-acid chain; its full sequence is ATP phosphoribosyltransferase regulatory subunit (393 aa).

Belongs to the class-II aminoacyl-tRNA synthetase family. HisZ subfamily. In terms of assembly, heteromultimer composed of HisG and HisZ subunits.

It localises to the cytoplasm. It functions in the pathway amino-acid biosynthesis; L-histidine biosynthesis; L-histidine from 5-phospho-alpha-D-ribose 1-diphosphate: step 1/9. In terms of biological role, required for the first step of histidine biosynthesis. May allow the feedback regulation of ATP phosphoribosyltransferase activity by histidine. The chain is ATP phosphoribosyltransferase regulatory subunit from Chromohalobacter salexigens (strain ATCC BAA-138 / DSM 3043 / CIP 106854 / NCIMB 13768 / 1H11).